We begin with the raw amino-acid sequence, 266 residues long: Uracil-DNA glycosylase (266 aa).

A disordered region spans residues 1–25 (MTRRADPAQATLFDDDEPAGAPTAT). The active-site Proton acceptor is the Asp97.

The protein belongs to the uracil-DNA glycosylase (UDG) superfamily. UNG family.

It is found in the cytoplasm. The catalysed reaction is Hydrolyzes single-stranded DNA or mismatched double-stranded DNA and polynucleotides, releasing free uracil.. Functionally, excises uracil residues from the DNA which can arise as a result of misincorporation of dUMP residues by DNA polymerase or due to deamination of cytosine. The chain is Uracil-DNA glycosylase from Ralstonia nicotianae (strain ATCC BAA-1114 / GMI1000) (Ralstonia solanacearum).